Reading from the N-terminus, the 817-residue chain is Coiled-coil domain-containing protein 175 (817 aa).

Coiled coils occupy residues 130-166 and 217-594; these read ILEI…ALGI and LQDA…KQEE. The segment at 761–817 is disordered; that stretch reads EEESPSSLSKEDLQKAGMKQKEEKTLRFSPSLHTRRDTLSRNCKMIKKRSRSPKNKP. Residues 769 to 786 are compositionally biased toward basic and acidic residues; the sequence is SKEDLQKAGMKQKEEKTL. Residues 804 to 817 show a composition bias toward basic residues; that stretch reads KMIKKRSRSPKNKP.

The chain is Coiled-coil domain-containing protein 175 (Ccdc175) from Rattus norvegicus (Rat).